The primary structure comprises 469 residues: Protein RUFY3 (469 aa).

2 positions are modified to phosphothreonine: threonine 5 and threonine 12. A phosphoserine mark is found at serine 34 and serine 49. Phosphothreonine is present on threonine 51. An RUN domain is found at 95–227 (DSDYAPLQQF…IDANFCMKGE (133 aa)). Coiled-coil stretches lie at residues 271–362 (NRHL…VEKE) and 422–463 (KSEL…AANK).

In terms of assembly, interacts with PAK1. Interacts (via C-terminus) with Ras-related Rab-5 proteins. Interacts (via C-terminus) with Ras-related Rap-2 proteins. Interacts with PIK3CA and PIK3R1. Interacts (via N-terminus) with FSCN1; this interaction induces neuron axon development. Interacts with DBN1. Interacts (via the second coiled coil) with GTP-, but not GDP-bound ARL8A and ARL8B. Interacts with dynactin/DCTN1 and the dynein intermediate chain DYNC1I1/2. Directly interacts with DYNC1LI1. Phosphorylated by PAK1.

It is found in the cytoplasm. The protein resides in the endomembrane system. It localises to the cell projection. Its subcellular location is the invadopodium. The protein localises to the growth cone. It is found in the perikaryon. The protein resides in the filopodium. It localises to the lamellipodium. Its subcellular location is the lysosome. In terms of biological role, ARL8 effector that promotes the coupling of endolysosomes to dynein-dynactin for retrograde transport along microtubules. Acts by binding both GTP-bound ARL8 and dynein-dynactin. In nonneuronal cells, promotes concentration of endolysosomes in the juxtanuclear area. In hippocampal neurons, drives retrograde transport of endolysosomes from the axon to the soma. Plays a role in the generation of neuronal polarity formation and axon growth. Implicated in the formation of a single axon by developing neurons. May inhibit the formation of additional axons by inhibition of PI3K in minor neuronal processes. Plays a role in the formation of F-actin-enriched protrusive structures at the cell periphery. Plays a role in cytoskeletal organization by regulating the subcellular localization of FSCN1 and DBN1 at axonal growth cones. This chain is Protein RUFY3, found in Pongo abelii (Sumatran orangutan).